We begin with the raw amino-acid sequence, 25 residues long: Small ribosomal subunit protein eS32 (25 aa).

The tract at residues 1–25 (MREKWKKKRSRRLRRKRRKMRARSK) is disordered.

It belongs to the eukaryotic ribosomal protein eS32 family. As to quaternary structure, component of the large ribosomal subunit.

The protein is Small ribosomal subunit protein eS32 (rpl41) of Agaricus bisporus (White button mushroom).